Here is a 762-residue protein sequence, read N- to C-terminus: Probable disease resistance protein At1g61300 (762 aa).

Glycine 2 is lipidated: N-myristoyl glycine. 2 S-palmitoyl cysteine lipidation sites follow: cysteine 3 and cysteine 4. The region spanning 26 to 329 is the NB-ARC domain; the sequence is NINRNSFGVE…CEGFIGEDQV (304 aa). 68–75 is a binding site for ATP; sequence GMGGVGKT. LRR repeat units lie at residues 401-422, 423-444, 447-470, 471-493, and 494-516; these read AVRR…SKCS, ELTT…FIRY, KLVV…SGLV, SLQF…KKLK, and KLTF…SRLL.

It belongs to the disease resistance NB-LRR family.

It localises to the cell membrane. Functionally, probable disease resistance protein. This Arabidopsis thaliana (Mouse-ear cress) protein is Probable disease resistance protein At1g61300.